The sequence spans 799 residues: Signal transducer and activator of transcription 5A (799 aa).

Tyrosine 90 bears the Phosphotyrosine mark. At serine 128 the chain carries Phosphoserine. Residues 589-686 (WNDGAILGFV…EVFSKYYTPV (98 aa)) enclose the SH2 domain. Position 682 is a phosphotyrosine (tyrosine 682). Tyrosine 699 is subject to Phosphotyrosine; by JAK2. The tract at residues 778–799 (DSLDPRLSPPAGLFASTRGSLS) is disordered. Serine 785 carries the phosphoserine modification.

This sequence belongs to the transcription factor STAT family. In terms of assembly, forms a homodimer or a heterodimer with a related family member. Binds NR3C1. Interacts with NCOA1 and SOCS7. Interacts with ERBB4. Interacts with EBF4. Interacts with CD69. Post-translationally, ISGylated. Tyrosine phosphorylated in response to KITLG/SCF, IL2, IL3, IL7, IL15, CSF2/GMCSF, GH1, PRL, EPO and THPO. Activated KIT promotes phosphorylation on tyrosine residues and subsequent translocation to the nucleus. Tyrosine phosphorylated in response to constitutively activated FGFR1, FGFR2, FGFR3 and FGFR4. Tyrosine phosphorylation is required for DNA-binding activity and dimerization. Serine phosphorylation is also required for maximal transcriptional activity. Tyrosine phosphorylated in response to signaling via activated FLT3; wild-type FLT3 results in much weaker phosphorylation than constitutively activated mutant FLT3. Alternatively, can be phosphorylated by JAK2 at Tyr-699.

It localises to the cytoplasm. The protein localises to the nucleus. Functionally, carries out a dual function: signal transduction and activation of transcription. Mediates cellular responses to the cytokine KITLG/SCF and other growth factors. May mediate cellular responses to activated FGFR1, FGFR2, FGFR3 and FGFR4. Binds to the GAS element and activates PRL-induced transcription. Regulates the expression of milk proteins during lactation. The protein is Signal transducer and activator of transcription 5A (STAT5A) of Sus scrofa (Pig).